The primary structure comprises 279 residues: F420-dependent methylenetetrahydromethanopterin dehydrogenase (279 aa).

This sequence belongs to the MTD family.

The catalysed reaction is 5,10-methylenetetrahydromethanopterin + oxidized coenzyme F420-(gamma-L-Glu)(n) + 2 H(+) = 5,10-methenyl-5,6,7,8-tetrahydromethanopterin + reduced coenzyme F420-(gamma-L-Glu)(n). The protein operates within one-carbon metabolism; methanogenesis from CO(2); 5,10-methylene-5,6,7,8-tetrahydromethanopterin from 5,10-methenyl-5,6,7,8-tetrahydromethanopterin (coenzyme F420 route): step 1/1. Functionally, catalyzes the reversible reduction of methenyl-H(4)MPT(+) to methylene-H(4)MPT. The polypeptide is F420-dependent methylenetetrahydromethanopterin dehydrogenase (mtd) (Methanosarcina mazei (strain ATCC BAA-159 / DSM 3647 / Goe1 / Go1 / JCM 11833 / OCM 88) (Methanosarcina frisia)).